The following is a 146-amino-acid chain: Cyanate hydratase (146 aa).

Residues arginine 87, glutamate 90, and serine 113 contribute to the active site.

This sequence belongs to the cyanase family.

It carries out the reaction cyanate + hydrogencarbonate + 3 H(+) = NH4(+) + 2 CO2. Its function is as follows. Catalyzes the reaction of cyanate with bicarbonate to produce ammonia and carbon dioxide. The chain is Cyanate hydratase from Trichormus variabilis (strain ATCC 29413 / PCC 7937) (Anabaena variabilis).